Consider the following 73-residue polypeptide: uncharacterized protein (73 aa).

This is an uncharacterized protein from Invertebrate iridescent virus 6 (IIV-6).